A 368-amino-acid chain; its full sequence is Uroporphyrinogen decarboxylase (368 aa).

Residues 41 to 45 (RQAGR), Asp91, Tyr168, Ser223, and His345 contribute to the substrate site.

The protein belongs to the uroporphyrinogen decarboxylase family. In terms of assembly, homodimer.

The protein resides in the cytoplasm. The enzyme catalyses uroporphyrinogen III + 4 H(+) = coproporphyrinogen III + 4 CO2. Its pathway is porphyrin-containing compound metabolism; protoporphyrin-IX biosynthesis; coproporphyrinogen-III from 5-aminolevulinate: step 4/4. Its function is as follows. Catalyzes the decarboxylation of four acetate groups of uroporphyrinogen-III to yield coproporphyrinogen-III. This is Uroporphyrinogen decarboxylase from Psychrobacter sp. (strain PRwf-1).